The sequence spans 174 residues: Ribosome maturation factor RimM (174 aa).

In terms of domain architecture, PRC barrel spans 97–169; the sequence is PDTYYDHQLE…ILEIDPPDGL (73 aa).

This sequence belongs to the RimM family. Binds ribosomal protein uS19.

The protein resides in the cytoplasm. An accessory protein needed during the final step in the assembly of 30S ribosomal subunit, possibly for assembly of the head region. Essential for efficient processing of 16S rRNA. May be needed both before and after RbfA during the maturation of 16S rRNA. It has affinity for free ribosomal 30S subunits but not for 70S ribosomes. This Mycobacterium ulcerans (strain Agy99) protein is Ribosome maturation factor RimM.